We begin with the raw amino-acid sequence, 281 residues long: NADPH-dependent 7-cyano-7-deazaguanine reductase (281 aa).

Substrate is bound at residue 88–90 (IES). NADPH is bound at residue 90–91 (SK). Residue Cys189 is the Thioimide intermediate of the active site. Catalysis depends on Asp196, which acts as the Proton donor. 228 to 229 (HE) is a binding site for substrate. Residue 257–258 (RG) participates in NADPH binding.

It belongs to the GTP cyclohydrolase I family. QueF type 2 subfamily. Homodimer.

The protein resides in the cytoplasm. It carries out the reaction 7-aminomethyl-7-carbaguanine + 2 NADP(+) = 7-cyano-7-deazaguanine + 2 NADPH + 3 H(+). It participates in tRNA modification; tRNA-queuosine biosynthesis. Its function is as follows. Catalyzes the NADPH-dependent reduction of 7-cyano-7-deazaguanine (preQ0) to 7-aminomethyl-7-deazaguanine (preQ1). The polypeptide is NADPH-dependent 7-cyano-7-deazaguanine reductase (Proteus mirabilis (strain HI4320)).